Here is a 479-residue protein sequence, read N- to C-terminus: Ribosomal RNA small subunit methyltransferase F (479 aa).

Residues 125 to 131, glutamate 149, aspartate 176, and aspartate 194 each bind S-adenosyl-L-methionine; that span reads AAAPGSK. The active-site Nucleophile is the cysteine 247.

Belongs to the class I-like SAM-binding methyltransferase superfamily. RsmB/NOP family.

It is found in the cytoplasm. It carries out the reaction cytidine(1407) in 16S rRNA + S-adenosyl-L-methionine = 5-methylcytidine(1407) in 16S rRNA + S-adenosyl-L-homocysteine + H(+). Specifically methylates the cytosine at position 1407 (m5C1407) of 16S rRNA. In Escherichia coli O139:H28 (strain E24377A / ETEC), this protein is Ribosomal RNA small subunit methyltransferase F.